The following is a 178-amino-acid chain: Interleukin-10 (178 aa).

The first 18 residues, 1–18 (MHSSALLCCLVFLTGVRA), serve as a signal peptide directing secretion. 2 cysteine pairs are disulfide-bonded: Cys30–Cys126 and Cys80–Cys132. An N-linked (GlcNAc...) asparagine glycan is attached at Asn134.

The protein belongs to the IL-10 family. As to quaternary structure, homodimer. Interacts with IL10RA and IL10RB.

It is found in the secreted. In terms of biological role, major immune regulatory cytokine that acts on many cells of the immune system where it has profound anti-inflammatory functions, limiting excessive tissue disruption caused by inflammation. Mechanistically, IL10 binds to its heterotetrameric receptor comprising IL10RA and IL10RB leading to JAK1 and STAT2-mediated phosphorylation of STAT3. In turn, STAT3 translocates to the nucleus where it drives expression of anti-inflammatory mediators. Targets antigen-presenting cells (APCs) such as macrophages and monocytes and inhibits their release of pro-inflammatory cytokines including granulocyte-macrophage colony-stimulating factor /GM-CSF, granulocyte colony-stimulating factor/G-CSF, IL-1 alpha, IL-1 beta, IL-6, IL-8 and TNF-alpha. Also interferes with antigen presentation by reducing the expression of MHC-class II and co-stimulatory molecules, thereby inhibiting their ability to induce T cell activation. In addition, controls the inflammatory response of macrophages by reprogramming essential metabolic pathways including mTOR signaling. This Callithrix jacchus (White-tufted-ear marmoset) protein is Interleukin-10 (IL10).